Consider the following 316-residue polypeptide: Olfactory receptor 10H3 (316 aa).

Residues 1 to 25 (MPGQNYRTISEFILSGFSAFPQQLL) lie on the Extracellular side of the membrane. Residues 26 to 46 (PVLFLLYLLMFLFTLLGNLLI) form a helical membrane-spanning segment. The Cytoplasmic segment spans residues 47 to 54 (MATVWIER). Residues 55 to 75 (RLHTPMYLFLCALSISEILFT) form a helical membrane-spanning segment. Residues 76 to 99 (VAITPRMLADLLFTHRSITFVACA) are Extracellular-facing. Cys-98 and Cys-190 are disulfide-bonded. Residues 100 to 120 (IQMFFSFMFGFTHSFLLMVMG) traverse the membrane as a helical segment. Topologically, residues 121–139 (YDHYVTICHPLHYNMLMSP) are cytoplasmic. The helical transmembrane segment at 140–160 (RGCAHLVAWTWAGGSVMGMMV) threads the bilayer. The Extracellular portion of the chain corresponds to 161 to 197 (TMMVFHLTFCGSNVIHHFLCHVLSLLKLACGSKTSSV). A helical membrane pass occupies residues 198–218 (IMGVMLVCVTALIGCLFLIIL). The Cytoplasmic portion of the chain corresponds to 219 to 238 (SFVFIVAAILRIPSAEGRHK). The helical transmembrane segment at 239–259 (TFSTCVSHLTVVVMHYSFASL) threads the bilayer. The Extracellular segment spans residues 260–272 (IYLKPKGLHSMYS). A helical membrane pass occupies residues 273 to 293 (DALMATTYTVFTPFLSPIIFS). Residues 294-316 (LRNKELKNAINKNFCRRFCPLSS) are Cytoplasmic-facing.

This sequence belongs to the G-protein coupled receptor 1 family.

It localises to the cell membrane. Odorant receptor. In Homo sapiens (Human), this protein is Olfactory receptor 10H3 (OR10H3).